The sequence spans 293 residues: Undecaprenyl-diphosphatase (293 aa).

The next 6 membrane-spanning stretches (helical) occupy residues 74–94, 107–127, 134–154, 209–229, 243–263, and 271–291; these read VLVFFAKEIWQIITGWFAGVF, WMIIVATIPVVILGVLGKDLI, MWITASVLILFSLVFILAEKM, FLLAIPAVLGSGLYSLPDAFA, VGTLVAFVVGYISIAWLMKFV, and FAAYRIPAGLLVMLLLALGML.

Belongs to the UppP family.

It localises to the cell membrane. The enzyme catalyses di-trans,octa-cis-undecaprenyl diphosphate + H2O = di-trans,octa-cis-undecaprenyl phosphate + phosphate + H(+). Catalyzes the dephosphorylation of undecaprenyl diphosphate (UPP). Confers resistance to bacitracin. This Corynebacterium glutamicum (strain ATCC 13032 / DSM 20300 / JCM 1318 / BCRC 11384 / CCUG 27702 / LMG 3730 / NBRC 12168 / NCIMB 10025 / NRRL B-2784 / 534) protein is Undecaprenyl-diphosphatase.